Reading from the N-terminus, the 628-residue chain is CMP-5'-(3-aminopropyl)phosphonate synthase (628 aa).

Residues 1–255 (MNENRTFATP…DPGDQRQADF (255 aa)) are mobA-like NTP transferase. The decarboxylase stretch occupies residues 278–628 (GVTDHALLYN…TTEGAGRADG (351 aa)). N6-(pyridoxal phosphate)lysine is present on Lys-466.

In the N-terminal section; belongs to the MobA family. This sequence in the C-terminal section; belongs to the class-I pyridoxal-phosphate-dependent aminotransferase family. It depends on Mg(2+) as a cofactor. Pyridoxal 5'-phosphate is required as a cofactor.

It catalyses the reaction 2-amino-4-phosphonobutanoate + CTP = CMP-5'-(3-amino-3-carboxypropyl)phosphonate + diphosphate. The catalysed reaction is CMP-5'-(3-amino-3-carboxypropyl)phosphonate + H(+) = CMP-5'-(3-aminopropyl)phosphonate + CO2. Its pathway is antibiotic biosynthesis. In terms of biological role, bifunctional cytidylyltransferase/decarboxylase involved in the biosynthesis of the phosphonate antibiotic FR-900098, a potent antimalarial agent that acts as an inhibitor of 1-deoxy-D-xylulose 5-phosphate reductoisomerase (DXR), the first enzyme in the nonmevalonate pathway for isoprenoid biosynthesis. Catalyzes the condensation of 2-amino-4-phosphonobutyrate (2APn) and CTP to form CMP-5'-2APn and then decarboxylates CMP-5'-2APn to yield CMP-5'-(3-aminopropyl)phosphonate (CMP-5'-3APn). This chain is CMP-5'-(3-aminopropyl)phosphonate synthase, found in Streptomyces rubellomurinus (strain ATCC 31215).